Reading from the N-terminus, the 224-residue chain is 7-cyano-7-deazaguanine synthase (224 aa).

10-20 (LSGGLDSATVV) is a binding site for ATP. 4 residues coordinate Zn(2+): Cys-189, Cys-199, Cys-202, and Cys-205.

It belongs to the QueC family. The cofactor is Zn(2+).

It carries out the reaction 7-carboxy-7-deazaguanine + NH4(+) + ATP = 7-cyano-7-deazaguanine + ADP + phosphate + H2O + H(+). It participates in purine metabolism; 7-cyano-7-deazaguanine biosynthesis. Its function is as follows. Catalyzes the ATP-dependent conversion of 7-carboxy-7-deazaguanine (CDG) to 7-cyano-7-deazaguanine (preQ(0)). This Pseudomonas putida (strain ATCC 700007 / DSM 6899 / JCM 31910 / BCRC 17059 / LMG 24140 / F1) protein is 7-cyano-7-deazaguanine synthase.